A 197-amino-acid chain; its full sequence is Casparian strip membrane protein 3 (197 aa).

Topologically, residues 1–35 (MSARVDIPADTSAAAKGTAPLIAASTHVKGGYKKG) are cytoplasmic. A helical membrane pass occupies residues 36 to 56 (LAIFDLVLRLGAVVTALAAAA). Over 57 to 85 (TMGTTDQTLPFFTQFFQFQASYDDLPTFQ) the chain is Extracellular. The chain crosses the membrane as a helical span at residues 86 to 106 (FFVIAMAIVSGYLVLSLPFSI). Residues 107 to 119 (VAIIRPHATGPRL) lie on the Cytoplasmic side of the membrane. A helical membrane pass occupies residues 120-140 (LLIILDTVALTLNTAAAAAAV). Residues 141-171 (AIVDLAQNGNSSANWLGICQQFGDFCQKASG) are Extracellular-facing. Asn150 carries N-linked (GlcNAc...) asparagine glycosylation. The helical transmembrane segment at 172 to 192 (AVVASFIAAGVLLFLIVISAL) threads the bilayer. Residues 193 to 197 (ALRKR) are Cytoplasmic-facing.

Belongs to the Casparian strip membrane proteins (CASP) family. In terms of assembly, homodimer and heterodimers.

The protein resides in the cell membrane. Its function is as follows. Regulates membrane-cell wall junctions and localized cell wall deposition. Required for establishment of the Casparian strip membrane domain (CSD) and the subsequent formation of Casparian strips, a cell wall modification of the root endodermis that determines an apoplastic barrier between the intraorganismal apoplasm and the extraorganismal apoplasm and prevents lateral diffusion. The chain is Casparian strip membrane protein 3 from Populus trichocarpa (Western balsam poplar).